The following is a 660-amino-acid chain: DNA mismatch repair protein MutL (660 aa).

It belongs to the DNA mismatch repair MutL/HexB family.

Its function is as follows. This protein is involved in the repair of mismatches in DNA. It is required for dam-dependent methyl-directed DNA mismatch repair. May act as a 'molecular matchmaker', a protein that promotes the formation of a stable complex between two or more DNA-binding proteins in an ATP-dependent manner without itself being part of a final effector complex. The chain is DNA mismatch repair protein MutL from Streptococcus equi subsp. zooepidemicus (strain MGCS10565).